Reading from the N-terminus, the 112-residue chain is Cell cycle protein GpsB (112 aa).

Residues 42–77 (YQKMADMNNEVVKLSEENHKLKKELEELRLRVATSR) are a coiled coil. Residues 74-96 (ATSRPQDNKNFSSNNSSSASNNV) form a disordered region. The span at 81 to 95 (NKNFSSNNSSSASNN) shows a compositional bias: low complexity.

The protein belongs to the GpsB family. As to quaternary structure, forms polymers through the coiled coil domains. Interacts with PBP1, MreC and EzrA.

It localises to the cytoplasm. Divisome component that associates with the complex late in its assembly, after the Z-ring is formed, and is dependent on DivIC and PBP2B for its recruitment to the divisome. Together with EzrA, is a key component of the system that regulates PBP1 localization during cell cycle progression. Its main role could be the removal of PBP1 from the cell pole after pole maturation is completed. Also contributes to the recruitment of PBP1 to the division complex. Not essential for septum formation. This Staphylococcus epidermidis (strain ATCC 12228 / FDA PCI 1200) protein is Cell cycle protein GpsB.